A 246-amino-acid polypeptide reads, in one-letter code: Ubiquinone biosynthesis O-methyltransferase (246 aa).

Positions 40, 70, 91, and 135 each coordinate S-adenosyl-L-methionine.

It belongs to the methyltransferase superfamily. UbiG/COQ3 family.

It carries out the reaction a 3-demethylubiquinol + S-adenosyl-L-methionine = a ubiquinol + S-adenosyl-L-homocysteine + H(+). It catalyses the reaction a 3-(all-trans-polyprenyl)benzene-1,2-diol + S-adenosyl-L-methionine = a 2-methoxy-6-(all-trans-polyprenyl)phenol + S-adenosyl-L-homocysteine + H(+). Its pathway is cofactor biosynthesis; ubiquinone biosynthesis. In terms of biological role, O-methyltransferase that catalyzes the 2 O-methylation steps in the ubiquinone biosynthetic pathway. This Colwellia psychrerythraea (strain 34H / ATCC BAA-681) (Vibrio psychroerythus) protein is Ubiquinone biosynthesis O-methyltransferase.